Here is a 102-residue protein sequence, read N- to C-terminus: UPF0473 protein SERP1179 (102 aa).

Belongs to the UPF0473 family.

This is UPF0473 protein SERP1179 from Staphylococcus epidermidis (strain ATCC 35984 / DSM 28319 / BCRC 17069 / CCUG 31568 / BM 3577 / RP62A).